A 201-amino-acid polypeptide reads, in one-letter code: MKLTPRQQEILDFIKSTLEVLGAPPTRMEISSAFGFASPNAAEDHLKALAKKGAIVLEPGSARGIRLVEQLGLPLIGSVAAGSPILAVENMQGRYALDASLFAPKADFLLKVRGLSMIDVGIFDGDLLAVHKTNQARDGQIVVARLDEEVTVKRLERSGGQIRLIAENPDFEPIIVDPEAVDFAIEGIAVGLIRGAVSKLS.

Positions arginine 27–lysine 47 form a DNA-binding region, H-T-H motif. Active-site for autocatalytic cleavage activity residues include serine 116 and lysine 153.

The protein belongs to the peptidase S24 family. As to quaternary structure, homodimer.

The catalysed reaction is Hydrolysis of Ala-|-Gly bond in repressor LexA.. Functionally, represses a number of genes involved in the response to DNA damage (SOS response), including recA and lexA. In the presence of single-stranded DNA, RecA interacts with LexA causing an autocatalytic cleavage which disrupts the DNA-binding part of LexA, leading to derepression of the SOS regulon and eventually DNA repair. The chain is LexA repressor from Dechloromonas aromatica (strain RCB).